A 29-amino-acid polypeptide reads, in one-letter code: Dermaseptin-J6 (29 aa).

A Valine amide modification is found at V29.

Expressed by the skin glands.

It is found in the secreted. Its function is as follows. Has antimicrobial activity. This Phasmahyla jandaia (Jandaia leaf frog) protein is Dermaseptin-J6.